Reading from the N-terminus, the 572-residue chain is Solute carrier family 22 member 16 (572 aa).

Residues 21 to 41 (IFLYFICAFQNISCGIHYLAS) traverse the membrane as a helical segment. N-linked (GlcNAc...) asparagine glycosylation is present at N57. 5 helical membrane-spanning segments follow: residues 156 to 176 (LIQP…GYLS), 183 to 203 (LVLW…AFTF), 208 to 228 (FIVA…VVFV), 244 to 264 (IHLH…GYFV), and 268 to 288 (WIYQ…CWML). N315 carries an N-linked (GlcNAc...) asparagine glycan. Helical transmembrane passes span 359–379 (TLIL…FSLN), 389–409 (LNLF…CLGM), 416–436 (NILI…MVIP), 441–461 (VWLV…FGLI), 476–496 (LAVG…PLCI), and 503–523 (IFMP…LTFL). An N-linked (GlcNAc...) asparagine glycan is attached at N559.

It belongs to the major facilitator (TC 2.A.1) superfamily. Organic cation transporter (TC 2.A.1.19) family.

It is found in the cell membrane. It carries out the reaction (R)-carnitine(in) = (R)-carnitine(out). The catalysed reaction is spermidine(in) = spermidine(out). Facilitative organic cation transporter that mediates the transport of carnitine as well as the polyamine spermidine. Mediates the partially Na(+)-dependent bidirectional transport of carnitine. May mediate L-carnitine secretion from testis epididymal epithelium into the lumen which is involved in the maturation of spermatozoa. This Bos taurus (Bovine) protein is Solute carrier family 22 member 16 (SLC22A16).